We begin with the raw amino-acid sequence, 229 residues long: 7-cyano-7-deazaguanine synthase (229 aa).

14 to 24 (LSGGQDSTTCL) provides a ligand contact to ATP. Residues C192, C200, C203, and C206 each coordinate Zn(2+).

It belongs to the QueC family. Zn(2+) is required as a cofactor.

The catalysed reaction is 7-carboxy-7-deazaguanine + NH4(+) + ATP = 7-cyano-7-deazaguanine + ADP + phosphate + H2O + H(+). The protein operates within purine metabolism; 7-cyano-7-deazaguanine biosynthesis. Catalyzes the ATP-dependent conversion of 7-carboxy-7-deazaguanine (CDG) to 7-cyano-7-deazaguanine (preQ(0)). This Laribacter hongkongensis (strain HLHK9) protein is 7-cyano-7-deazaguanine synthase.